Reading from the N-terminus, the 231-residue chain is Large ribosomal subunit protein uL1 (231 aa).

It belongs to the universal ribosomal protein uL1 family. In terms of assembly, part of the 50S ribosomal subunit.

Binds directly to 23S rRNA. The L1 stalk is quite mobile in the ribosome, and is involved in E site tRNA release. Its function is as follows. Protein L1 is also a translational repressor protein, it controls the translation of the L11 operon by binding to its mRNA. The chain is Large ribosomal subunit protein uL1 from Dechloromonas aromatica (strain RCB).